The following is a 389-amino-acid chain: Tyrosine aminotransferase (389 aa).

An N6-(pyridoxal phosphate)lysine modification is found at K242.

It belongs to the class-I pyridoxal-phosphate-dependent aminotransferase family. Homodimer. Pyridoxal 5'-phosphate is required as a cofactor.

The catalysed reaction is L-tyrosine + 2-oxoglutarate = 3-(4-hydroxyphenyl)pyruvate + L-glutamate. It participates in amino-acid degradation; L-phenylalanine degradation; acetoacetate and fumarate from L-phenylalanine: step 2/6. Functionally, transaminase involved in tyrosine breakdown. Converts tyrosine to p-hydroxyphenylpyruvate. The chain is Tyrosine aminotransferase (tatA) from Rhizobium meliloti (strain 1021) (Ensifer meliloti).